The primary structure comprises 270 residues: Tetraspanin-17 (270 aa).

Residues 1 to 19 (MPGKHQQFQDPEVGCCGKY) are Cytoplasmic-facing. Residues 20-40 (FLFGFNIVFWVLGALFLAIGL) form a helical membrane-spanning segment. At 41-63 (WAWGEKGVLSNISALTDLGGLDP) the chain is on the extracellular side. Asn51 carries N-linked (GlcNAc...) asparagine glycosylation. A helical transmembrane segment spans residues 64–84 (VWLFVVVGGVMSVLGFAGCIG). Topologically, residues 85-94 (ALRENTFLLK) are cytoplasmic. A helical transmembrane segment spans residues 95–115 (FFSVFLGLIFFLELAAGILAF). Over 116-234 (VFKDWIRDQL…GQFEKWLQDN (119 aa)) the chain is Extracellular. 4 cysteine pairs are disulfide-bonded: Cys155-Cys223, Cys156-Cys188, Cys172-Cys182, and Cys189-Cys202. The N-linked (GlcNAc...) asparagine glycan is linked to Asn171. Residues 235 to 255 (LIVVAGVLVGIALLQIFGLCL) traverse the membrane as a helical segment. Residues 256 to 270 (AQNLVSDIKAVKANW) are Cytoplasmic-facing.

The protein belongs to the tetraspanin (TM4SF) family. Interacts with ADAM10; the interaction influences ADAM10 substrate specificity, endocytosis and turnover.

It is found in the cell membrane. In terms of biological role, part of TspanC8 subgroup, composed of 6 members that interact with the transmembrane metalloprotease ADAM10. This interaction is required for ADAM10 exit from the endoplasmic reticulum and for enzymatic maturation and trafficking to the cell surface as well as substrate specificity. Different TspanC8/ADAM10 complexes have distinct substrates. Seems to regulate VE-cadherin expression in endothelial cells probably through interaction with ADAM10, promoting leukocyte transmigration. In Mus musculus (Mouse), this protein is Tetraspanin-17 (Tspan17).